Reading from the N-terminus, the 121-residue chain is Protein p14.5 (121 aa).

Residue Ala2 is modified to N-acetylalanine; by host. Residues 84–121 (SLVPDEADNKPEDDEESGGAKPKKKKHLFPKLSSHKSK) are disordered. The segment covering 104 to 121 (KPKKKKHLFPKLSSHKSK) has biased composition (basic residues).

This sequence belongs to the asfivirus structural protein p14.5 family. As to quaternary structure, interacts with the major capsid protein. Interacts with host IRF3; this interaction interferes with the recruitment of IRF3 to TBK1. Acetylated.

The protein localises to the virion. In terms of biological role, structural protein required for transport of intracellular particles from the assembly sites to the plasma membrane. Binds to both ssDNA and dsDNA. Suppressed the activation of the cGAS/STING pathway by interfering with the recruitment of IRF3 to TBK1, which in turn suppresses IRF3 phosphorylation, decreasing interferon production. In African swine fever virus (isolate Pig/Kenya/KEN-50/1950) (ASFV), this protein is Protein p14.5.